The primary structure comprises 200 residues: Oligoribonuclease (200 aa).

One can recognise an Exonuclease domain in the interval 5–169; it reads MVWIDCEMTG…ADIRESIAEL (165 aa). Residue Y126 is part of the active site.

This sequence belongs to the oligoribonuclease family.

It is found in the cytoplasm. Functionally, 3'-to-5' exoribonuclease specific for small oligoribonucleotides. In Streptomyces coelicolor (strain ATCC BAA-471 / A3(2) / M145), this protein is Oligoribonuclease.